Consider the following 330-residue polypeptide: DNA-directed RNA polymerase subunit alpha (330 aa).

Residues 1-232 (MAILAFQKPD…YHFMLFSDEK (232 aa)) form an alpha N-terminal domain (alpha-NTD) region. The interval 248–330 (EEVLHMRQLL…DISKYKLDKE (83 aa)) is alpha C-terminal domain (alpha-CTD).

This sequence belongs to the RNA polymerase alpha chain family. In terms of assembly, homodimer. The RNAP catalytic core consists of 2 alpha, 1 beta, 1 beta' and 1 omega subunit. When a sigma factor is associated with the core the holoenzyme is formed, which can initiate transcription.

It catalyses the reaction RNA(n) + a ribonucleoside 5'-triphosphate = RNA(n+1) + diphosphate. Its function is as follows. DNA-dependent RNA polymerase catalyzes the transcription of DNA into RNA using the four ribonucleoside triphosphates as substrates. The polypeptide is DNA-directed RNA polymerase subunit alpha (Bacteroides thetaiotaomicron (strain ATCC 29148 / DSM 2079 / JCM 5827 / CCUG 10774 / NCTC 10582 / VPI-5482 / E50)).